A 299-amino-acid chain; its full sequence is Pyridoxal kinase PdxY (299 aa).

Residue Ser18 participates in substrate binding. Residues Asp120 and Glu157 each coordinate ATP. Asp235 contributes to the substrate binding site.

This sequence belongs to the pyridoxine kinase family. PdxY subfamily. In terms of assembly, homodimer. The cofactor is Mg(2+).

The catalysed reaction is pyridoxal + ATP = pyridoxal 5'-phosphate + ADP + H(+). It functions in the pathway cofactor metabolism; pyridoxal 5'-phosphate salvage; pyridoxal 5'-phosphate from pyridoxal: step 1/1. Functionally, pyridoxal kinase involved in the salvage pathway of pyridoxal 5'-phosphate (PLP). Catalyzes the phosphorylation of pyridoxal to PLP. This is Pyridoxal kinase PdxY from Deinococcus geothermalis (strain DSM 11300 / CIP 105573 / AG-3a).